We begin with the raw amino-acid sequence, 240 residues long: Proteasome subunit alpha (240 aa).

This sequence belongs to the peptidase T1A family. The 20S proteasome core is composed of 14 alpha and 14 beta subunits that assemble into four stacked heptameric rings, resulting in a barrel-shaped structure. The two inner rings, each composed of seven catalytic beta subunits, are sandwiched by two outer rings, each composed of seven alpha subunits. The catalytic chamber with the active sites is on the inside of the barrel. Has a gated structure, the ends of the cylinder being occluded by the N-termini of the alpha-subunits. Is capped at one or both ends by the proteasome regulatory ATPase, PAN.

The protein localises to the cytoplasm. The formation of the proteasomal ATPase PAN-20S proteasome complex, via the docking of the C-termini of PAN into the intersubunit pockets in the alpha-rings, triggers opening of the gate for substrate entry. Interconversion between the open-gate and close-gate conformations leads to a dynamic regulation of the 20S proteasome proteolysis activity. Its function is as follows. Component of the proteasome core, a large protease complex with broad specificity involved in protein degradation. The polypeptide is Proteasome subunit alpha (Methanoculleus marisnigri (strain ATCC 35101 / DSM 1498 / JR1)).